A 141-amino-acid chain; its full sequence is Nucleoside diphosphate kinase (141 aa).

ATP is bound by residues Lys11, Phe59, Arg87, Thr93, Arg104, and Asn114. Residue His117 is the Pros-phosphohistidine intermediate of the active site.

Belongs to the NDK family. In terms of assembly, homotetramer. Mg(2+) is required as a cofactor.

The protein localises to the cytoplasm. The enzyme catalyses a 2'-deoxyribonucleoside 5'-diphosphate + ATP = a 2'-deoxyribonucleoside 5'-triphosphate + ADP. It carries out the reaction a ribonucleoside 5'-diphosphate + ATP = a ribonucleoside 5'-triphosphate + ADP. Major role in the synthesis of nucleoside triphosphates other than ATP. The ATP gamma phosphate is transferred to the NDP beta phosphate via a ping-pong mechanism, using a phosphorylated active-site intermediate. The sequence is that of Nucleoside diphosphate kinase from Teredinibacter turnerae (strain ATCC 39867 / T7901).